Here is a 1425-residue protein sequence, read N- to C-terminus: MAAKAIQYNIKVDLHEVKDLSFREAAGEKEIVPNPYIEVTVNGVTKTTIQKTQVVSATFNTSFNFTAYLTPDEFARSYVEVAVLHKYMLIGGVGLQSAVIGKYVFSFAYVYTKSQHWIYRQWVTLRNLDQPQDETGLLLITVGVFGPGDAMPVVDETVCVVNEGERTSTDVNVKLTHYSLSVNIFKGQDIPSVAGQFSTVLEPYVKVKHGGAELQTRPLPDSNPDWLASISIPACVPCFDGNVLVELWNGQDSSTAAGTLMGTVVLDYFQLIKNDLPPRWFNFYWRPPAEGLLGAVTDMMASAELREPIAYGGRILLSASAAKVQTPLPLGVRSARPIPDPATQECVWWLDLYEMTSATGYTSELRIEIAFGPHVIKTASLEANALGTYVIGDNLGRLPEMKIFAPVDEVQVWDVMMYVCSPPATTVAAGIADISNWFSGWGGSPTATQNTPEPAETPWTRLAWVRIPYDSRQFQNGKPQWYSLRSLDGSGTDMFSVLLGMEMFPTKAGKQRAPRLEYKLARFYFRALIYEGLHLPAVGYDVFPDPYIQVELASKTLRTSTIRQTLNPSYYEAYEIEIRLPENISLAPDINVEVISESNSLLSSDVVLGSVQYPIQKVPKEWTKAPVWLQLHSKAYPRCKARVLVAFELVPAEKAEDDTYPFYDDIRPSTKEGNIRLFLVGVRLFKPITQPFVTVCFGRDVENTAEPLWSQESSAPRTGEGGNWNFLEEFTVSVSLPKRMQHHSFLEVKIQDRTQGIGGESNVDVGMAYITLNPLLPWLDSRERAESLETFRLQMLEEVLIEDAENARRSADGGLAARTGGGSFDEDATKKKEMLAAERSRKMAIPYNDPDMANLKIEEVDDYVSFKVAPRPQASRLSREGTSRDERGKAPGKSLSGMPGPVARASPGAGEETEKKGDPVAEKKEGGAQAAPPVAPSAHQREALAASPEEETYGFTPEQLNFVLADLEEDDAEEMTRDEVPYELEADFTVDDLPYLRTPIFRPTDAGVPETVGYLKYVCRVFQSTDEDEGAEMDAVCKSLIETYNSTRDLVVRAYVLAARGLVPPSGASDIQTYVWIQDSENAATLPGGLSYNIRDTGYTKKQGFKPEFNRCYTLACSLPENSIVQIAVMNMGRLTDECIGRTYLDVEDRFFNKKVEQMVIEESTPIELRTLKNEGSTVSHGSLRGFFEIMRADYAQLHPPYTLASAEPDEYQLRVVIWRVKAVPLDDNSSISLFVRTIYQLEDSSEIVKDTDTHYNSTDGTAVYNWRMVFDVLIPAQIPVLKLQIWNYALLSSTEPIGEANFDLTADFFRARKRQQHYRVPRMWVRCSHPAHKGKLRGTIEIEASILPREEAEYTPVGNGRDEPNRDPFLPAVTTNRTYIDWQQIGETVGAASSAIMSGLKWTGVWMTVAGIIALVIFVMFLLK.

3 consecutive C2 domains span residues 1–123 (MAAK…RQWV), 161–281 (VNEG…PRWF), and 506–629 (TKAG…PVWL). The disordered stretch occupies residues 871-952 (RPQASRLSRE…ALAASPEEET (82 aa)). 2 stretches are compositionally biased toward basic and acidic residues: residues 877–889 (LSRE…ERGK) and 912–926 (ETEK…KKEG). C2 domains lie at 1032–1160 (EMDA…EQMV) and 1192–1319 (RADY…QQHY). Residues 1404–1424 (TGVWMTVAGIIALVIFVMFLL) traverse the membrane as a helical segment.

It belongs to the ferlin family.

The protein resides in the golgi apparatus. It is found in the trans-Golgi network membrane. Its subcellular location is the endosome membrane. It localises to the cytoplasm. Plays a role in microneme replenishment, probably at the vesicular trafficking level. Directs microneme organelle traffic differentially based on microneme population. Regulates microneme secretion: facilitates microneme membrane fusion with the plasma membrane. The sequence is that of Ferlin 1 from Toxoplasma gondii.